A 377-amino-acid polypeptide reads, in one-letter code: Nitric oxide reductase FlRd-NAD(+) reductase (377 aa).

This sequence belongs to the FAD-dependent oxidoreductase family. FAD serves as cofactor.

Its subcellular location is the cytoplasm. The enzyme catalyses 2 reduced [nitric oxide reductase rubredoxin domain] + NAD(+) + H(+) = 2 oxidized [nitric oxide reductase rubredoxin domain] + NADH. It participates in nitrogen metabolism; nitric oxide reduction. One of at least two accessory proteins for anaerobic nitric oxide (NO) reductase. Reduces the rubredoxin moiety of NO reductase. This is Nitric oxide reductase FlRd-NAD(+) reductase from Salmonella newport (strain SL254).